Here is a 219-residue protein sequence, read N- to C-terminus: ATP-dependent Clp protease proteolytic subunit 1, mitochondrial (219 aa).

The N-terminal 23 residues, 1 to 23, are a transit peptide targeting the mitochondrion; sequence MLRRILTTSSVRNLTSSTQARVG. Serine 118 (nucleophile) is an active-site residue. Histidine 143 is a catalytic residue.

It belongs to the peptidase S14 family. In terms of assembly, tetradecamer that assembles into a two heptameric rings with a central cavity.

It localises to the mitochondrion matrix. It catalyses the reaction Hydrolysis of proteins to small peptides in the presence of ATP and magnesium. alpha-casein is the usual test substrate. In the absence of ATP, only oligopeptides shorter than five residues are hydrolyzed (such as succinyl-Leu-Tyr-|-NHMec, and Leu-Tyr-Leu-|-Tyr-Trp, in which cleavage of the -Tyr-|-Leu- and -Tyr-|-Trp bonds also occurs).. Clp cleaves peptides in various proteins in a process that requires ATP hydrolysis. Clp may be responsible for a fairly general and central housekeeping function rather than for the degradation of specific substrates. The sequence is that of ATP-dependent Clp protease proteolytic subunit 1, mitochondrial from Caenorhabditis briggsae.